The primary structure comprises 373 residues: Histidine protein methyltransferase 1 homolog (373 aa).

The segment covering serine 30–threonine 42 has biased composition (basic and acidic residues). Disordered regions lie at residues serine 30–glutamine 52 and lysine 64–lysine 94. The span at alanine 70 to leucine 88 shows a compositional bias: polar residues. A phosphoserine mark is found at serine 72 and serine 77. Histidine 154 carries the post-translational modification Tele-methylhistidine. Residues isoleucine 168–threonine 172, glycine 195, and glutamine 216–tyrosine 218 contribute to the S-adenosyl-L-methionine site. The short motif at proline 247–arginine 253 is the Nuclear localization signal element. Residues glycine 269–tryptophan 271 and serine 294 each bind S-adenosyl-L-methionine.

This sequence belongs to the methyltransferase superfamily. METTL18 family. As to quaternary structure, interacts with GRWD1 and members of the heat shock protein 90 and 70 families; these proteins may possibly be methylation substrates for the enzyme. Post-translationally, monomethylated at His-154 through automethylation. Automethylation at His-154 positively regulates the methyltransferase activity toward RPL3. Probably methylated on other residues.

The protein localises to the cytoplasm. It localises to the cytosol. It is found in the nucleus. The protein resides in the nucleolus. The catalysed reaction is L-histidyl-[protein] + S-adenosyl-L-methionine = N(tele)-methyl-L-histidyl-[protein] + S-adenosyl-L-homocysteine + H(+). Protein-L-histidine N-tele-methyltransferase that specifically monomethylates RPL3, thereby regulating translation elongation. Histidine methylation of RPL3 regulates translation elongation by slowing ribosome traversal on tyrosine codons: slower elongation provides enough time for proper folding of synthesized proteins and prevents cellular aggregation of tyrosine-rich proteins. This is Histidine protein methyltransferase 1 homolog (METTL18) from Bos taurus (Bovine).